The chain runs to 2415 residues: Spectrin alpha chain (2415 aa).

Spectrin repeat units follow at residues 48–150, 154–254, 258–362, 366–464, 471–574, 577–679, 683–784, 788–890, and 894–963; these read RFQY…KLQQ, LVQF…QEKL, HEIQ…KLDE, LHRF…DRRI, DLQL…LLED, RYQQ…KLNE, QQQF…QHLL, QVQQ…QDLD, and QAHQ…RQQE. An SH3 domain is found at 970-1029; the sequence is TGKECVVALYDYTEKSPREVSMKKGDVLTLLNSNNKDWWKVEVNDRQGFVPAAYIKKIDA. Phosphoserine occurs at positions 1032 and 1034. Spectrin repeat units lie at residues 1079-1177, 1181-1284, 1287-1391, 1394-1496, 1500-1604, 1608-1710, 1714-1816, 1820-1921, 1926-2028, 2040-2141, and 2154-2252; these read VREA…ASQL, HEVQ…EKLL, YDLQ…QLEQ, DLQL…SRLG, TLQQ…KLKE, QRTY…RLNE, LHQF…KLDE, YQQF…GALL, YLQF…DRLL, LYLT…DGEL, and LRKE…NLEQ. 2 EF-hand domains span residues 2265-2300 and 2308-2343; these read DSLK…LGYD and QPDP…KETE. Ca(2+) is bound by residues D2278, D2280, S2282, K2284, E2289, D2321, N2323, D2325, Y2327, and E2332.

This sequence belongs to the spectrin family. In terms of assembly, native spectrin molecule is a tetramer composed of two antiparallel heterodimers joined head to head so that each end of the native molecule includes the C-terminus of the alpha subunit and the N-terminus of the beta subunit. Interacts with calmodulin in a calcium-dependent manner, interacts with F-actin and also interacts with Lva. Interacts with Ten-m. As to expression, a substantial pool of maternal protein in the egg undergoes dynamic changes in distribution early in embryogenesis. In gastrulated embryo, the highest level of protein is found in the respiratory tract cells and the lowest in parts of the forming gut.

The protein localises to the cytoplasm. The protein resides in the cytoskeleton. It localises to the golgi apparatus. It is found in the cell projection. Its subcellular location is the cilium. The protein localises to the flagellum. Its function is as follows. Spectrin is the major constituent of the cytoskeletal network underlying the erythrocyte plasma membrane. It associates with band 4.1 and actin to form the cytoskeletal superstructure of the erythrocyte plasma membrane. Essential for larval survival and development. Stabilizes cell to cell interactions that are critical for the maintenance of cell shape and subcellular organization within embryonic tissues. Lva and spectrin may form a Golgi-based scaffold that mediates interaction of Golgi bodies with microtubules and facilitates Golgi-derived membrane secretion required for the formation of furrows during cellularization. In Drosophila melanogaster (Fruit fly), this protein is Spectrin alpha chain (alpha-Spec).